The chain runs to 255 residues: 5-oxoprolinase subunit A (255 aa).

The protein belongs to the LamB/PxpA family. Forms a complex composed of PxpA, PxpB and PxpC.

The catalysed reaction is 5-oxo-L-proline + ATP + 2 H2O = L-glutamate + ADP + phosphate + H(+). Functionally, catalyzes the cleavage of 5-oxoproline to form L-glutamate coupled to the hydrolysis of ATP to ADP and inorganic phosphate. The protein is 5-oxoprolinase subunit A of Thermococcus onnurineus (strain NA1).